A 239-amino-acid chain; its full sequence is MSLYRDEGVVLRTSKLAEADRIITVLTRDHGKIRAVAKGVRRTKSRFGARLEPFMRVDLLIAEGRSLDTVSQAESIAAYGAAIVGDYAAYEAANVIVETIDKLVGTERERMTDQYRLLIGALNALAKRAHAPQAIGCSYVMRALALAGWTPRLGTCVVCGAAAPAYLSIASGGVMCEADHTTDARRIAPSALGQFDALVHGDWTVLDAAPVERVVRELVEDWGEYYLERPIRSLRLIDS.

The protein belongs to the RecO family.

In terms of biological role, involved in DNA repair and RecF pathway recombination. In Bifidobacterium longum subsp. infantis (strain ATCC 15697 / DSM 20088 / JCM 1222 / NCTC 11817 / S12), this protein is DNA repair protein RecO.